The following is a 210-amino-acid chain: Thymidylate kinase (210 aa).

Gly-10–Ser-17 is an ATP binding site.

It belongs to the thymidylate kinase family.

It catalyses the reaction dTMP + ATP = dTDP + ADP. Functionally, phosphorylation of dTMP to form dTDP in both de novo and salvage pathways of dTTP synthesis. This chain is Thymidylate kinase, found in Haemophilus influenzae (strain PittEE).